A 361-amino-acid polypeptide reads, in one-letter code: 5-formaminoimidazole-4-carboxamide-1-(beta)-D-ribofuranosyl 5'-monophosphate synthetase (361 aa).

Residues His27 and Ser94 each contribute to the 5-amino-1-(5-phospho-beta-D-ribosyl)imidazole-4-carboxamide site. One can recognise an ATP-grasp domain in the interval 116 to 348; sequence RQILRWEAER…MGQRIAKEIK (233 aa). Residues 146–208 and Glu230 each bind ATP; that span reads PDEI…TNYC. Asn258 is a binding site for 5-amino-1-(5-phospho-beta-D-ribosyl)imidazole-4-carboxamide. Mg(2+) contacts are provided by Gln297 and Glu310.

It belongs to the phosphohexose mutase family. Mg(2+) serves as cofactor. The cofactor is Mn(2+).

The enzyme catalyses 5-amino-1-(5-phospho-beta-D-ribosyl)imidazole-4-carboxamide + formate + ATP = 5-formamido-1-(5-phospho-D-ribosyl)imidazole-4-carboxamide + ADP + phosphate. It participates in purine metabolism; IMP biosynthesis via de novo pathway; 5-formamido-1-(5-phospho-D-ribosyl)imidazole-4-carboxamide from 5-amino-1-(5-phospho-D-ribosyl)imidazole-4-carboxamide (formate route): step 1/1. Catalyzes the ATP- and formate-dependent formylation of 5-aminoimidazole-4-carboxamide-1-beta-d-ribofuranosyl 5'-monophosphate (AICAR) to 5-formaminoimidazole-4-carboxamide-1-beta-d-ribofuranosyl 5'-monophosphate (FAICAR) in the absence of folates. This is 5-formaminoimidazole-4-carboxamide-1-(beta)-D-ribofuranosyl 5'-monophosphate synthetase from Methanococcus aeolicus (strain ATCC BAA-1280 / DSM 17508 / OCM 812 / Nankai-3).